We begin with the raw amino-acid sequence, 2121 residues long: MVNIYIFGDQTVRVDDAVHKLLHVKNNPILKSFLDGSFAAIRKQIFLLPANERTSLPDAHTLPLLLEAVRRGRRHVALESALVCLCEIGQYIALLQTTDLCHPPTGSILVGFCTGSLAAAAVSCVRTSIDLLTLGIEAVVVAFRVGMHVARRANALGGDGGSQWKPWSLAVTDGSESETEKILEEFTRDEVSGVHVANRHDAYILAKGLPAIMKPYVSAAGSNTLTISGTPRVLEALKASPHLRGTKSLPVSIYAPYHAAHLYNEADVESIFACKPVESALFHRELRTPLISCATGTVLKEKTFGDLLRALVMEILTCQIRFDKVEESIVQHTPGATAQLIPIHTNIAPRMKTSLTQVGLQVECFKAIANQEPAAEALSESPSNDSSKIAIIGFSGRFPEADGLNEFWELLQQGLDVHKPIPADRFDLEAHYDATLREKNTSRIKHGCWIRSPGSFDARFFQMSPREACQTDPAQRLALLTAYEAMEMAGFVPDRTPSSQRDRVGVYYGMTSDDWREVNSSQDIDTYFIPGGIRAFVPGRINYFFKFSGPSITVDTACSSSLAAIHTACNALLNSDCDTALAGGTNILTNPDNFAGLDRGHFLSSTGNCKTFDDDADGYCRADGVGTVILKRLQDAIADNDPIFGVIVGARTSHSAEAVSITRPLADAQAHLFRKLLAESGIHPHEISYIEMHGTGTQAGDAVEMKSVLDSFARDDSRAPDRPLHLGSVKANVGHGESASGVTALIKVLLMMQKNRIPPHCGIKGRINRHFPTDMEYRNVHIPFMETDWTRPQEGKRRSFINNFSAAGGNTAVLVEDAPLLEQSRAISSPDPQRYHVITLSARSVRSLSKNMRALGEFIGSETSPGLLARIAYTTTARRMHHSYRVAFVGNDLQEVKRRFLDTDVTEAIKPCPTKSPGVGFLFTGQGAQQTAMARELYDRFTSFRADILEFEAVGRGHGFPSILPLITGAVDVEELSPMIVQLGTVVIQIAMARLWQTWGLTPEYALGHSLGEYAALQIAGVLSISDTIYLAGSRAALLEKRCTAGSHGMLAVKASVAHLEEALKGMQVEVSCINGFDDTVLSGTNDEIDRASKELSELKVTFKRLILPFAFHSSQVDPILEELEHIASQLSFQPPRIPIVSPTVGHIITDEGTIGAQYIRRHCREPVNFLGAIQAAQGSGICNSGALAVEIGAHPILTRMMKAAVGSSVTVCSTLSHREDMFKTLTESLSVLHLAGVRLNWDEYHRDFNNQVVMLPAYSWDYQDYWIQYQNNFCLTKGSPERSESVDAIQPMSTRLSPSVQKILEEEMTAAQASIIIESDITDPELLPVALDHKVNGVTLCPSSLYADIGHTLGTYLLGKKEDVTDYKIDVSNMAVEKALVVKGTGPQLFRASLDMDWNMLRGMMKVYSVNNMGTLTTHHAQCTIELQRPHQWQEGWNRQLYLIQRSIEQLKKGVEEGWTHKMRRGVAYRLFSSMMQYGPSYQAMEEVIFDSSGLEATAQVRLQSTTGRYSFNPVWSDSLGHITGFVTNCNDSIDLTENLFVNHGWGFMRCVEPFSPDTVYQTHVKMQPVDGNNGFYVGDVYVLNDHRIIAQYGAVTFQKVARRVLEMLLPATTSKGRSSNIRPRNVGTAQSAKIVQSKRRTQTPHVEDAWQQVLEMIARELGVDPGQLTEDVNFTDMGVDSLMSLTIIGNFREFLSLDVPWSLFEDCPSVQSLRIYLNMSSLSESDSIETSSYPTPDESTTTTITSPSGSDRNVGRNSGIDGVGTTVGLVLSILAEEIGVNVRDLSNADGLSELGLDSLLSITALGRVRDETDLDLPSDFFLEHSSVAAITAALHAIFGSTEQGPEQSLITSHPPAMSINLQGDEGCPQTLFLFPDGSGSSTSYSALPTISKDVRVYAMDCPYLKRPNELAKCQLQDLTPVYVAEIRRRQLRGPYSLGGWSAGGIAAYEAAQYLVDQGERVERLILIDSPNPMGLGKCPPHFYRFLEEAGVFGVHGGRKPPAWLLQHFQAFNDVLSQYTLEPFRPADATPNTTLIYAQDGVCKSPRDPRPERHPGDPEVFSWLLENRVDMSCNGWDQLLGEDNIHLGTVFDANHFTIVRTPAVVRLSEIVRMAMSRKFQ.

The 254-residue stretch at 5–258 folds into the Starter acyltransferase (SAT) domain; sequence YIFGDQTVRV…LPVSIYAPYH (254 aa). In terms of domain architecture, Ketosynthase family 3 (KS3) spans 386-817; the sequence is SSKIAIIGFS…GGNTAVLVED (432 aa). Catalysis depends on for beta-ketoacyl synthase activity residues C558, H693, and H735. The region spanning 921-1239 is the Malonyl-CoA:ACP transacylase (MAT) domain; that stretch reads FLFTGQGAQQ…LSVLHLAGVR (319 aa). The segment at 1302 to 1433 is N-terminal hotdog fold; sequence QKILEEEMTA…CTIELQRPHQ (132 aa). The region spanning 1302–1608 is the PKS/mFAS DH domain; that stretch reads QKILEEEMTA…FQKVARRVLE (307 aa). The active-site Proton acceptor; for dehydratase activity is H1334. The C-terminal hotdog fold stretch occupies residues 1461–1608; sequence THKMRRGVAY…FQKVARRVLE (148 aa). D1519 serves as the catalytic Proton donor; for dehydratase activity. One can recognise a Carrier 1 domain in the interval 1646–1723; it reads PHVEDAWQQV…SLRIYLNMSS (78 aa). O-(pantetheine 4'-phosphoryl)serine is present on S1683. Residues 1728–1752 are compositionally biased toward low complexity; it reads DSIETSSYPTPDESTTTTITSPSGS. Residues 1728-1760 form a disordered region; that stretch reads DSIETSSYPTPDESTTTTITSPSGSDRNVGRNS. A Carrier 2 domain is found at 1763–1840; it reads DGVGTTVGLV…AITAALHAIF (78 aa). S1800 carries the O-(pantetheine 4'-phosphoryl)serine modification. Positions 1872–1976 are TE/CLC (thioesterase/Claisen cyclase) domain; that stretch reads TLFLFPDGSG…ILIDSPNPMG (105 aa).

Requires pantetheine 4'-phosphate as cofactor.

Functionally, non-reducing polyketide synthase; part of the gene cluster that mediates the biosynthesis of a methylated derivative of known natural products orthosporin and diaporthin. AoiG catalyzes the biosynthesis of the hexaketide isocoumarin scaffold, via condensation of one acetyl-CoA starter unit with 6 malonyl-CoA units. An oxidoreductase that has still to be identified catalyzes the stereospecific reduction of the carbonyl moiety of the hexaketide isocoumarin scaffold to generate the S-configured secondary alcohol at C-11 of orthosporin. The methyltrasferase aoiF then catalyzes the biotransformation of not only orthosporin to diaporthin but also diaporthin to the final product, by performing a tandem methylation of the polyketide core. The chain is Non-reducing polyketide synthase aoiG from Aspergillus oryzae (strain ATCC 42149 / RIB 40) (Yellow koji mold).